We begin with the raw amino-acid sequence, 930 residues long: Carnosine synthase 1 (930 aa).

The interval 1–24 is disordered; the sequence is MISVDRLSEEQALGMKEQEWAGPE. An ATP-grasp domain is found at 624–825; the sequence is RPPPAAFSVP…LLLAAVLLAL (202 aa). 650 to 716 serves as a coordination point for ATP; that stretch reads VPFPAVAKLE…MEYVPGTEHD (67 aa). Positions 782, 794, and 796 each coordinate Mg(2+). Positions 782, 794, and 796 each coordinate Mn(2+).

Homotetramer. Mg(2+) serves as cofactor. It depends on Mn(2+) as a cofactor.

The enzyme catalyses beta-alanine + L-histidine + ATP = carnosine + ADP + phosphate + H(+). The catalysed reaction is 4-aminobutanoate + L-histidine + ATP = L-homocarnosine + ADP + phosphate + H(+). Its function is as follows. Catalyzes the synthesis of carnosine and homocarnosine. Carnosine is synthesized more efficiently than homocarnosine. This chain is Carnosine synthase 1, found in Gallus gallus (Chicken).